Consider the following 91-residue polypeptide: Small ribosomal subunit protein bS18 (91 aa).

The protein belongs to the bacterial ribosomal protein bS18 family. As to quaternary structure, part of the 30S ribosomal subunit. Forms a tight heterodimer with protein bS6.

Binds as a heterodimer with protein bS6 to the central domain of the 16S rRNA, where it helps stabilize the platform of the 30S subunit. The polypeptide is Small ribosomal subunit protein bS18 (Burkholderia multivorans (strain ATCC 17616 / 249)).